The sequence spans 467 residues: Nodulation protein T (467 aa).

The signal sequence occupies residues 1–17 (MRFTRYTTPFFSLLLSG). Residue cysteine 18 is the site of N-palmitoyl cysteine attachment. A lipid anchor (S-diacylglycerol cysteine) is attached at cysteine 18.

The protein belongs to the outer membrane factor (OMF) (TC 1.B.17) family.

Its subcellular location is the cell membrane. The polypeptide is Nodulation protein T (nodT) (Rhizobium leguminosarum bv. trifolii).